The sequence spans 269 residues: Ribonuclease HII (269 aa).

The 191-residue stretch at 79–269 folds into the RNase H type-2 domain; it reads TYLAGADEVG…SFLKNILNTF (191 aa). A divalent metal cation contacts are provided by Asp85, Glu86, and Asp182.

The protein belongs to the RNase HII family. The cofactor is Mn(2+). Requires Mg(2+) as cofactor.

Its subcellular location is the cytoplasm. It carries out the reaction Endonucleolytic cleavage to 5'-phosphomonoester.. Endonuclease that specifically degrades the RNA of RNA-DNA hybrids. This chain is Ribonuclease HII, found in Clostridium novyi (strain NT).